The following is a 341-amino-acid chain: Peptidoglycan recognition protein 3 (341 aa).

The N-terminal stretch at 1–17 (MGTLPWLLAFFILGLQA) is a signal peptide. 2 N-acetylmuramoyl-L-alanine amidase domains span residues 77–179 (TIGW…KVCP) and 200–325 (PAKY…ILSP). Asn113 is a glycosylation site (N-linked (GlcNAc...) asparagine). 3 disulfide bridges follow: Cys178-Cys300, Cys194-Cys238, and Cys214-Cys220. Positions 231, 235, and 242 each coordinate peptidoglycan. The interval 264–269 (HTYGFN) is interaction with murein.

This sequence belongs to the N-acetylmuramoyl-L-alanine amidase 2 family. In terms of assembly, monomer. Homodimer; disulfide-linked. Heterodimer with PGLYRP4; disulfide-linked. Post-translationally, N-glycosylated. In terms of tissue distribution, detected in skin epidermis, eccrine sweat glands and ducts, ciliary body epithelial cells of the eye, in small intestine, colon, stomach and in mature epithelial cells of the tongue (at protein level). Highly expressed in skin and esophagus, expressed also in tonsils and thymus and to a much lesser extent in the stomach, descending colon, rectum and brain.

It is found in the secreted. Functionally, pattern receptor that binds to murein peptidoglycans (PGN) of Gram-positive bacteria. Has bactericidal activity towards Gram-positive bacteria. May kill Gram-positive bacteria by interfering with peptidoglycan biosynthesis. Also binds to Gram-negative bacteria, and has bacteriostatic activity towards Gram-negative bacteria. Plays a role in innate immunity. The protein is Peptidoglycan recognition protein 3 (PGLYRP3) of Homo sapiens (Human).